The chain runs to 141 residues: Translation initiation factor IF-1, chloroplastic (141 aa).

The N-terminal 46 residues, 1–46 (MLQLCSTFRPQLLLPCQFRFTNGVLIPQINYVASNSVVNIRPMIRC), are a transit peptide targeting the chloroplast. The interval 49–69 (ASGGRGGANRSKPAKPQVKEG) is disordered. In terms of domain architecture, S1-like spans 63 to 138 (KPQVKEGSNK…TKGRIIFRMS (76 aa)).

Belongs to the IF-1 family. Component of the 30S ribosomal translation pre-initiation complex which assembles on the 30S ribosome in the order IF-2 and IF-3, IF-1 and N-formylmethionyl-tRNA(fMet); mRNA recruitment can occur at any time during PIC assembly.

It localises to the plastid. The protein resides in the chloroplast. One of the essential components for the initiation of protein synthesis. Stabilizes the binding of IF-2 and IF-3 on the 30S subunit to which N-formylmethionyl-tRNA(fMet) subsequently binds. Helps modulate mRNA selection, yielding the 30S pre-initiation complex (PIC). Upon addition of the 50S ribosomal subunit IF-1, IF-2 and IF-3 are released leaving the mature 70S translation initiation complex. This chain is Translation initiation factor IF-1, chloroplastic, found in Arabidopsis thaliana (Mouse-ear cress).